The chain runs to 776 residues: Protein translocase subunit SecA 2 (776 aa).

ATP contacts are provided by residues Gln80, 98 to 102 (GEGKT), and Asp486.

This sequence belongs to the SecA family. As to quaternary structure, monomer and homodimer. Part of the essential Sec protein translocation apparatus which comprises SecA, SecYEG and auxiliary proteins SecDF. Other proteins may also be involved.

The protein resides in the cell membrane. It is found in the cytoplasm. It carries out the reaction ATP + H2O + cellular proteinSide 1 = ADP + phosphate + cellular proteinSide 2.. Part of the Sec protein translocase complex. Interacts with the SecYEG preprotein conducting channel. Has a central role in coupling the hydrolysis of ATP to the transfer of proteins into and across the cell membrane, serving as an ATP-driven molecular motor driving the stepwise translocation of polypeptide chains across the membrane. The protein is Protein translocase subunit SecA 2 of Listeria innocua serovar 6a (strain ATCC BAA-680 / CLIP 11262).